Here is a 222-residue protein sequence, read N- to C-terminus: Small ribosomal subunit protein uS3 (222 aa).

A KH type-2 domain is found at 39–109 (IRNFVKKKVY…NILINIVEVK (71 aa)).

Belongs to the universal ribosomal protein uS3 family. In terms of assembly, part of the 30S ribosomal subunit. Forms a tight complex with proteins S10 and S14.

Binds the lower part of the 30S subunit head. Binds mRNA in the 70S ribosome, positioning it for translation. The polypeptide is Small ribosomal subunit protein uS3 (Clostridium tetani (strain Massachusetts / E88)).